Reading from the N-terminus, the 257-residue chain is GTP cyclohydrolase III (257 aa).

The protein belongs to the archaeal-type GTP cyclohydrolase family.

It carries out the reaction GTP + 3 H2O = 2-amino-5-formylamino-6-(5-phospho-D-ribosylamino)pyrimidin-4(3H)-one + 2 phosphate + 2 H(+). Its function is as follows. Catalyzes the formation of 2-amino-5-formylamino-6-ribofuranosylamino-4(3H)-pyrimidinone ribonucleotide monophosphate and inorganic phosphate from GTP. Also has an independent pyrophosphate phosphohydrolase activity. This chain is GTP cyclohydrolase III, found in Halorubrum lacusprofundi (strain ATCC 49239 / DSM 5036 / JCM 8891 / ACAM 34).